The sequence spans 212 residues: Nucleoside triphosphate pyrophosphatase (212 aa).

The Proton acceptor role is filled by aspartate 79.

Belongs to the Maf family. A divalent metal cation serves as cofactor.

It is found in the cytoplasm. It catalyses the reaction a ribonucleoside 5'-triphosphate + H2O = a ribonucleoside 5'-phosphate + diphosphate + H(+). It carries out the reaction a 2'-deoxyribonucleoside 5'-triphosphate + H2O = a 2'-deoxyribonucleoside 5'-phosphate + diphosphate + H(+). Nucleoside triphosphate pyrophosphatase. May have a dual role in cell division arrest and in preventing the incorporation of modified nucleotides into cellular nucleic acids. This is Nucleoside triphosphate pyrophosphatase from Nocardia farcinica (strain IFM 10152).